A 52-amino-acid chain; its full sequence is Protein RepA (52 aa).

A DNA-binding region (H-T-H motif) is located at residues 20-40 (KLEELAQKYGMTKSGLVNFLV).

Belongs to the transcriptional regulatory CopG/NikR family. In terms of assembly, homodimer.

Functionally, regulates the plasmid copy number. RepA binds to the repAB promoter thus controlling the synthesis of the plasmid replication initiator protein RepB. This chain is Protein RepA (repA), found in Lactiplantibacillus plantarum (Lactobacillus plantarum).